A 440-amino-acid chain; its full sequence is Transposon Ty1-LR4 Gag polyprotein (440 aa).

3 stretches are compositionally biased toward polar residues: residues 1–10 (MESQQLSQHP), 48–60 (TKAN…TPAS), and 127–152 (QSQF…GNTF). 3 disordered regions span residues 1-93 (MESQ…MMTQ), 126-173 (PQSQ…RPPP), and 352-440 (GSRN…PGTY). The span at 153–165 (TDSSSADSDMTST) shows a compositional bias: low complexity. The tract at residues 299–401 (NNGIHINNKV…NSKSKTARAH (103 aa)) is RNA-binding. Low complexity predominate over residues 402–418 (NVSTSNNSPSTDNDSIS). Residue serine 416 is modified to Phosphoserine. Residues 419–428 (KSTTEPIQLN) show a composition bias toward polar residues. Over residues 429–440 (NKHDLHLRPGTY) the composition is skewed to basic and acidic residues.

In terms of assembly, homotrimer.

The protein localises to the cytoplasm. Functionally, capsid protein (CA) is the structural component of the virus-like particle (VLP), forming the shell that encapsulates the retrotransposons dimeric RNA genome. The particles are assembled from trimer-clustered units and there are holes in the capsid shells that allow for the diffusion of macromolecules. CA also has nucleocapsid-like chaperone activity, promoting primer tRNA(i)-Met annealing to the multipartite primer-binding site (PBS), dimerization of Ty1 RNA and initiation of reverse transcription. The protein is Transposon Ty1-LR4 Gag polyprotein (TY1A-LR4) of Saccharomyces cerevisiae (strain ATCC 204508 / S288c) (Baker's yeast).